We begin with the raw amino-acid sequence, 189 residues long: Large ribosomal subunit protein eL18 (189 aa).

This sequence belongs to the eukaryotic ribosomal protein eL18 family.

Its subcellular location is the cytoplasm. The polypeptide is Large ribosomal subunit protein eL18 (RpL18) (Drosophila pseudoobscura pseudoobscura (Fruit fly)).